The sequence spans 101 residues: MATNHLVLSGTITRSRSFKSPAGIAHSVIMLEHKSQCFEAEMLRNVYCQMQVIFSGERFESVTEQLKSGVDIEVQGFIALQQSRNGQNRLVLHAENVELKT.

The SSB domain occupies 1 to 101 (MATNHLVLSG…LHAENVELKT (101 aa)).

The protein belongs to the PriB family. Homodimer. Interacts with PriA and DnaT. Component of the replication restart primosome. Primosome assembly occurs via a 'hand-off' mechanism. PriA binds to replication forks, subsequently PriB then DnaT bind; DnaT then displaces ssDNA to generate the helicase loading substrate.

Functionally, involved in the restart of stalled replication forks, which reloads the replicative helicase on sites other than the origin of replication; the PriA-PriB pathway is the major replication restart pathway. During primosome assembly it facilitates complex formation between PriA and DnaT on DNA; stabilizes PriA on DNA. Stimulates the DNA unwinding activity of PriA helicase. The protein is Replication restart protein PriB of Shewanella sediminis (strain HAW-EB3).